The following is a 357-amino-acid chain: MTRPTLRETVARLAPGTGLRDGLERILRGRTGALIVLGNDENVEAICDGGFALDVRYAPTRLRELAKMDGAVVLSTDGSRIVRANVQLVPDPSIATDESGTRHRSAERAAIQTGYPVISVSHSMNIVTVYVGGERHVVADSATILSRANQAIATLERYKIRLDEVSRQLSRAEIEDFVTLRDVLTVVQRLELVRRIGQVIDNDVVELGTDGRQLRLQLDELLGGNDNARELIVRDYHASPEQLSEAQMTATLDELDALSDTELLDFTALAKVFGYPTTTEAQDSAVSPRGYRALAGIPRLQFAHADLLVRSFGTLQNVLAASASDLQSIDGIGAMWARHVREGLSQLAESTITDSLS.

Residues 3-141 (RPTLRETVAR…GGERHVVADS (139 aa)) enclose the DAC domain. Residues glycine 70, leucine 88, and 101–105 (TRHRS) contribute to the ATP site.

This sequence belongs to the DisA family. Homooctamer. It depends on Mg(2+) as a cofactor.

The enzyme catalyses 2 ATP = 3',3'-c-di-AMP + 2 diphosphate. Participates in a DNA-damage check-point. DisA forms globular foci that rapidly scan along the chromosomes searching for lesions. Functionally, also has diadenylate cyclase activity, catalyzing the condensation of 2 ATP molecules into cyclic di-AMP (c-di-AMP). c-di-AMP likely acts as a signaling molecule that may couple DNA integrity with a cellular process. This Mycolicibacterium paratuberculosis (strain ATCC BAA-968 / K-10) (Mycobacterium paratuberculosis) protein is DNA integrity scanning protein DisA.